The following is a 390-amino-acid chain: MKLSTALVLGATATGAWSYAIPQLEQEVLELPETHYEQQEKYLIELSPYQTRWVTEEEKWALKLDGVNFIDITEDRNYGLFPTLDAGSYVNYPQKMGYVDTVKGLIAGLSMDNMRKDLENFTSFHTRYYKSSSGVESAQWLYDQVSKVVRDSGADKFGATVQKFDHSWGQFSIIARIPGLSKKTVVLGAHQDSINLFLPSFLGAPGADDDGSGTVTILEALRGLLKSDIVAHGQSPNTIEFHWYSAEEGGMLGSQAIFSKYKKNQADVKAMLQQDMTGYVQGTKHAGQKESIGVMTDFVDPALTSFLKNTIVTYCAIPFVETKCGYACSDHTSASKYGYPSAMATESTMENSNKHIHTTDDKISYLSFDHMLEHAKLTLGFAYELAFAAL.

The signal sequence occupies residues 1-18 (MKLSTALVLGATATGAWS). A propeptide spanning residues 19-90 (YAIPQLEQEV…FPTLDAGSYV (72 aa)) is cleaved from the precursor. N-linked (GlcNAc...) asparagine glycosylation is present at N120. Positions 190, 209, 248, and 275 each coordinate Zn(2+). C324 and C328 are joined by a disulfide. H357 serves as a coordination point for Zn(2+).

This sequence belongs to the peptidase M28 family. M28E subfamily. In terms of assembly, monomer. The cofactor is Zn(2+).

It localises to the secreted. Extracellular aminopeptidase that allows assimilation of proteinaceous substrates. The chain is Leucine aminopeptidase 1 (lap1) from Emericella nidulans (strain FGSC A4 / ATCC 38163 / CBS 112.46 / NRRL 194 / M139) (Aspergillus nidulans).